The primary structure comprises 252 residues: 5'-nucleotidase SurE (252 aa).

Residues Asp-8, Asp-9, Ser-40, and Asn-92 each coordinate a divalent metal cation.

Belongs to the SurE nucleotidase family. Requires a divalent metal cation as cofactor.

The protein resides in the cytoplasm. The catalysed reaction is a ribonucleoside 5'-phosphate + H2O = a ribonucleoside + phosphate. Functionally, nucleotidase that shows phosphatase activity on nucleoside 5'-monophosphates. This Mesorhizobium japonicum (strain LMG 29417 / CECT 9101 / MAFF 303099) (Mesorhizobium loti (strain MAFF 303099)) protein is 5'-nucleotidase SurE.